The primary structure comprises 492 residues: Tyrosine--tRNA ligase, mitochondrial (492 aa).

Tyr-89 contacts L-tyrosine. Asp-93 is an ATP binding site. Residues 94–103 (PTAQSLHLGN) carry the 'HIGH' region motif. L-tyrosine contacts are provided by Asp-133, Tyr-239, Gln-243, Asp-246, and Gln-265. The 'KMSKS' region motif lies at 303-307 (KFGKS). Position 306 (Lys-306) interacts with ATP.

The protein belongs to the class-I aminoacyl-tRNA synthetase family. As to quaternary structure, homodimer.

It localises to the mitochondrion matrix. The enzyme catalyses tRNA(Tyr) + L-tyrosine + ATP = L-tyrosyl-tRNA(Tyr) + AMP + diphosphate + H(+). Functionally, catalyzes the attachment of tyrosine to tRNA(Tyr) in a two-step reaction: tyrosine is first activated by ATP to form Tyr-AMP and then transferred to the acceptor end of tRNA(Tyr). The protein is Tyrosine--tRNA ligase, mitochondrial (MSY1) of Saccharomyces cerevisiae (strain ATCC 204508 / S288c) (Baker's yeast).